Here is a 158-residue protein sequence, read N- to C-terminus: Arginine repressor (158 aa).

This sequence belongs to the ArgR family.

The protein resides in the cytoplasm. The protein operates within amino-acid biosynthesis; L-arginine biosynthesis [regulation]. Functionally, regulates arginine biosynthesis genes. This is Arginine repressor from Anaeromyxobacter sp. (strain Fw109-5).